The primary structure comprises 141 residues: Protein GAT3 (141 aa).

The GATA-type zinc finger occupies 72 to 98 (CPQCAVIKTSPQWREGPDGEVTLCNAC).

The polypeptide is Protein GAT3 (GAT3) (Saccharomyces cerevisiae (strain ATCC 204508 / S288c) (Baker's yeast)).